The chain runs to 285 residues: Release factor glutamine methyltransferase (285 aa).

S-adenosyl-L-methionine contacts are provided by residues 119-123 (GTGSG), E142, W175, and N191. Position 191 to 194 (191 to 194 (NPPY)) interacts with substrate.

Belongs to the protein N5-glutamine methyltransferase family. PrmC subfamily.

It catalyses the reaction L-glutaminyl-[peptide chain release factor] + S-adenosyl-L-methionine = N(5)-methyl-L-glutaminyl-[peptide chain release factor] + S-adenosyl-L-homocysteine + H(+). In terms of biological role, methylates the class 1 translation termination release factors RF1/PrfA and RF2/PrfB on the glutamine residue of the universally conserved GGQ motif. The polypeptide is Release factor glutamine methyltransferase (Burkholderia pseudomallei (strain K96243)).